A 302-amino-acid chain; its full sequence is Fluoroacetate dehalogenase (302 aa).

An AB hydrolase-1 domain is found at 32–270; it reads PPLLLLHGFP…LDVWRKWASD (239 aa). Asp110 serves as the catalytic Nucleophile. Fluoroacetate contacts are provided by Arg111, Arg114, His155, Trp156, and Tyr219. Catalysis depends on His280, which acts as the Proton acceptor.

It belongs to the AB hydrolase superfamily. Epoxide hydrolase family. In terms of assembly, homodimer.

The catalysed reaction is a haloacetate + H2O = a halide anion + glycolate + H(+). It carries out the reaction fluoroacetate + H2O = fluoride + glycolate + H(+). The enzyme catalyses chloroacetate + H2O = glycolate + chloride + H(+). In terms of biological role, catalyzes the hydrolytic defluorination of fluoroacetate to produce glycolate. Has lower activity towards chloroacetate and bromoacetate. The chain is Fluoroacetate dehalogenase from Rhodopseudomonas palustris (strain ATCC BAA-98 / CGA009).